A 719-amino-acid polypeptide reads, in one-letter code: Translation initiation factor IF-2 (719 aa).

Positions 54 to 67 are enriched in basic and acidic residues; sequence NKEETKPNVDEKPP. Disordered regions lie at residues 54 to 75 and 97 to 122; these read NKEE…LTDN and STKN…KRKN. The span at 109-122 shows a compositional bias: basic residues; it reads KDKKKKNKKDKRKN. The 170-residue stretch at 221 to 390 folds into the tr-type G domain; the sequence is HRSPVVTVMG…LLVSEMSELK (170 aa). Residues 230–237 are G1; sequence GHVDHGKT. 230–237 contacts GTP; that stretch reads GHVDHGKT. A G2 region spans residues 255-259; that stretch reads GITQH. A G3 region spans residues 276-279; the sequence is DTPG. GTP-binding positions include 276-280 and 330-333; these read DTPGH and NKMD. The G4 stretch occupies residues 330–333; the sequence is NKMD. A G5 region spans residues 366–368; it reads SAR.

The protein belongs to the TRAFAC class translation factor GTPase superfamily. Classic translation factor GTPase family. IF-2 subfamily.

It localises to the cytoplasm. In terms of biological role, one of the essential components for the initiation of protein synthesis. Protects formylmethionyl-tRNA from spontaneous hydrolysis and promotes its binding to the 30S ribosomal subunits. Also involved in the hydrolysis of GTP during the formation of the 70S ribosomal complex. The sequence is that of Translation initiation factor IF-2 from Alkaliphilus oremlandii (strain OhILAs) (Clostridium oremlandii (strain OhILAs)).